The following is a 181-amino-acid chain: Adenylyl-sulfate kinase (181 aa).

Position 13–20 (13–20) interacts with ATP; it reads GVSGAGKS. Residue Ser-87 is the Phosphoserine intermediate of the active site.

The protein belongs to the APS kinase family.

The catalysed reaction is adenosine 5'-phosphosulfate + ATP = 3'-phosphoadenylyl sulfate + ADP + H(+). It functions in the pathway sulfur metabolism; hydrogen sulfide biosynthesis; sulfite from sulfate: step 2/3. In terms of biological role, catalyzes the synthesis of activated sulfate. The chain is Adenylyl-sulfate kinase from Burkholderia ambifaria (strain ATCC BAA-244 / DSM 16087 / CCUG 44356 / LMG 19182 / AMMD) (Burkholderia cepacia (strain AMMD)).